Here is a 627-residue protein sequence, read N- to C-terminus: MEEIIREDYFEALSSRNEEEQEMLRMLTKLEIDSAYTSEKLMNLHVLLMHLLAWDNDLEGMGTLDSSPASFEKALTFDLLCGILESEVKEVDEVLDVLEAQIVDTSYKISSCKHGNYIVIEGKLGESAESLKQSRGQVSEITLQLAQLRRTLHYIRNGTSENEESVELRQKYALKPSDLRHKNALRMLEKSLSRELELEKKLMEFQQNEEQLKLKLHYTEEVSSRMEEASEFIWGRFLEADNSSEVLTGISKELVGRLQILQFSLNGSAQRESELKSKLEDCTVQLEAKDLLVQKLEGTISENSEIVSEVLTLREYVKSAEQKLKNTDLELKSVNASKQEILVHLAEMENANESVKENLFEAESRAESGEAKIKELDAANLELTEELNFLKDADDKKTKKVNSLEKQVRELEVQVQNSKVSSEANQEQQNMLYSAIWDMETLIEDLKSKASKAESRTETVEEQCIVLSTTNSELNKDVSFLRQKAKSLEAMLDLANNEKERYAQEITTRNKVLMDMMLQLSSERERIQEQLYSLAKENKILRVNQCSNTYQRNGSYAGDKELSFHADGHEIEALAESLQEDERTREEPEKQSVSEKSSEIRRAIKLKHILVVALVFVLFCSFFGVTY.

Coiled coils occupy residues 81 to 152 (CGIL…RRTL), 188 to 218 (LEKS…KLHY), and 312 to 542 (TLRE…KILR). Residues 577-597 (SLQEDERTREEPEKQSVSEKS) are disordered. The span at 580-597 (EDERTREEPEKQSVSEKS) shows a compositional bias: basic and acidic residues. The chain crosses the membrane as a helical span at residues 606–626 (LKHILVVALVFVLFCSFFGVT).

In terms of assembly, component of Ran complexes at least composed of WIT1 or WIT2, RANGAP1 or RANGAP2, and WIP1 or WIP2 or WIP3. Interacts with KAKU1. Core component of the LINC complex which is composed of inner nuclear membrane SUN domain-containing proteins coupled to outer nuclear membrane WIP and WIT proteins. The LINC complex also involves nucleoskeletal proteins CRWN/LINC and possibly KAKU4 and the cytoskeletal myosin KAKU1. Interacts with WIP1, WIP2 and WIP3. In terms of tissue distribution, ubiquitous.

The protein resides in the membrane. Its function is as follows. Together with WIT1, required for the nuclear envelope docking of RANGAP proteins in root tips. Plays a role in nuclear shape determination. As component of the SUN-WIP-WIT2-KAKU1 complex, mediates the transfer of cytoplasmic forces to the nuclear envelope (NE), leading to nuclear shape changes. This chain is WPP domain-interacting tail-anchored protein 2 (WIT2), found in Arabidopsis thaliana (Mouse-ear cress).